The chain runs to 175 residues: Heme-dependent oxidative N-demethylase delta subunit (175 aa).

The heme-dependent oxidative N-demethylase (HODM) is a heterotetramer composed of a catalytic alpha subunit, a FMN/2Fe-2S-dependent oxidoreductase beta subunit, a gamma subunit with putative aminotransferase activity, and a delta subunit of unknown function.

In terms of biological role, component of the heme-dependent oxidative N-demethylase (HODM) enzyme, that catalyzes the NADPH-dependent oxidation of dimethylamine (DMA) to methylamine (MA) and formaldehyde. Functions in bacterial methylated amine catabolism, linking alkylamine oxidation to the tetrahydrofolate C1 pool. The function of the delta subunit is unknown. This chain is Heme-dependent oxidative N-demethylase delta subunit, found in Ectopseudomonas mendocina (strain ymp) (Pseudomonas mendocina).